The primary structure comprises 197 residues: Holliday junction branch migration complex subunit RuvA (197 aa).

The interval 1 to 63 is domain I; it reads MFDYIKGQLT…EDAHLLFGFH (63 aa). A domain II region spans residues 64-142; it reads TENEKDVFLK…TIPEGGQAQQ (79 aa). The flexible linker stretch occupies residues 142–146; sequence QMPKA. Positions 147-197 are domain III; the sequence is KGNQQLDEAIEALLALGYKATELKKIRAFFEGTDDTAEQYIKSALKMLMKG.

The protein belongs to the RuvA family. Homotetramer. Forms an RuvA(8)-RuvB(12)-Holliday junction (HJ) complex. HJ DNA is sandwiched between 2 RuvA tetramers; dsDNA enters through RuvA and exits via RuvB. An RuvB hexamer assembles on each DNA strand where it exits the tetramer. Each RuvB hexamer is contacted by two RuvA subunits (via domain III) on 2 adjacent RuvB subunits; this complex drives branch migration. In the full resolvosome a probable DNA-RuvA(4)-RuvB(12)-RuvC(2) complex forms which resolves the HJ.

Its subcellular location is the cytoplasm. In terms of biological role, the RuvA-RuvB-RuvC complex processes Holliday junction (HJ) DNA during genetic recombination and DNA repair, while the RuvA-RuvB complex plays an important role in the rescue of blocked DNA replication forks via replication fork reversal (RFR). RuvA specifically binds to HJ cruciform DNA, conferring on it an open structure. The RuvB hexamer acts as an ATP-dependent pump, pulling dsDNA into and through the RuvAB complex. HJ branch migration allows RuvC to scan DNA until it finds its consensus sequence, where it cleaves and resolves the cruciform DNA. This is Holliday junction branch migration complex subunit RuvA from Streptococcus uberis (strain ATCC BAA-854 / 0140J).